Reading from the N-terminus, the 193-residue chain is Cerebellin-1 (193 aa).

Residues 1 to 21 (MLGVVELLLLGAAWLAGPARG) form the signal peptide. A glycan (N-linked (GlcNAc...) asparagine) is linked at asparagine 23. The segment at 34–38 (CLVVC) is essential for interaction with NRXN1 and linker of two C1q trimers into disulfide-linked hexamers. A C1q domain is found at 57–193 (SGSAKVAFSA…TFSGFLVFPL (137 aa)). The tract at residues 62 to 193 (VAFSAIRSTN…TFSGFLVFPL (132 aa)) is necessary for interaction with CBLN3, and homotrimerization. Residue asparagine 79 is glycosylated (N-linked (GlcNAc...) asparagine). An essential for interaction with GRID2 region spans residues 122–147 (YNRQTIQVSLMLNGWPVISAFAGDQD).

In terms of assembly, homohexamer; disulfide-linked homotrimers. The trimers are assembled via the globular C1q domains. The trimers associate via N-terminal cysteine residues to form disulfide-linked hexamers. May form oligomers with CBLN2, CBLN3 and CBLN4 prior to secretion. Once secreted, does not interact with other CBLN family members. Interacts with GRID1. Interacts with NRXN1 and NRXN2 long (alpha) and short (beta) isoforms produced by alternative promoter usage. Competes with NLGN1 for NRXN1-binding. Weakly interacts with NRXN3 short isoform and not at all with NRXN3 long isoform. Interacts (via C1q domain) with GRID2; GRID2-binding is calcium-independent; CBLN1 hexamers anchor GRID2 N-terminal domain dimers to monomeric NRXN1 isoform beta; promotes synaptogenesis and mediates the D-Serine-dependent long term depression signals and AMPA receptor endocytosis. Post-translationally, the proteolytic processing to yield cerebellin seems to occur either prior to the secretion by presynaptic neurons and subsequent oligomerization or in some other location after release of the mature protein. In terms of processing, sialoglycoprotein.

It is found in the secreted. The protein resides in the postsynaptic cell membrane. Required for synapse integrity and synaptic plasticity. During cerebellar synapse formation, essential for the matching and maintenance of pre- and post-synaptic elements at parallel fiber-Purkinje cell synapses, the establishment of the proper pattern of climbing fiber-Purkinje cell innervation, and induction of long-term depression at parallel fiber-Purkinje cell synapses. Plays a role as a synaptic organizer that acts bidirectionally on both pre- and post-synaptic components. On the one hand induces accumulation of synaptic vesicles in the pre-synaptic part by binding with NRXN1 and in other hand induces clustering of GRID2 and its associated proteins at the post-synaptic site through association of GRID2. NRXN1-CBLN1-GRID2 complex directly induces parallel fiber protrusions that encapsulate spines of Purkinje cells leading to accumulation of GRID2 and synaptic vesicles. Required for CBLN3 export from the endoplasmic reticulum and secretion. NRXN1-CBLN1-GRID2 complex mediates the D-Serine-dependent long term depression signals and AMPA receptor endocytosis. Essential for long-term maintenance but not establishment of excitatory synapses. Inhibits the formation and function of inhibitory GABAergic synapses in cerebellar Purkinje cells. In terms of biological role, the cerebellin peptide exerts neuromodulatory functions. Directly stimulates norepinephrine release via the adenylate cyclase/PKA-dependent signaling pathway; and indirectly enhances adrenocortical secretion in vivo, through a paracrine mechanism involving medullary catecholamine release. The chain is Cerebellin-1 from Bos taurus (Bovine).